The chain runs to 257 residues: Glutamate racemase (257 aa).

Residues 12–13 (DS) and 44–45 (YG) contribute to the substrate site. Catalysis depends on cysteine 75, which acts as the Proton donor/acceptor. 76 to 77 (NT) is a binding site for substrate. Cysteine 185 serves as the catalytic Proton donor/acceptor. Substrate is bound at residue 186–187 (TH).

It belongs to the aspartate/glutamate racemases family.

It carries out the reaction L-glutamate = D-glutamate. Its pathway is cell wall biogenesis; peptidoglycan biosynthesis. Provides the (R)-glutamate required for cell wall biosynthesis. The protein is Glutamate racemase of Clostridium botulinum (strain Okra / Type B1).